We begin with the raw amino-acid sequence, 420 residues long: Cell division protein FtsA (420 aa).

It belongs to the FtsA/MreB family. Self-interacts. Interacts with FtsZ.

The protein localises to the cell inner membrane. Its function is as follows. Cell division protein that is involved in the assembly of the Z ring. May serve as a membrane anchor for the Z ring. This chain is Cell division protein FtsA, found in Escherichia coli O157:H7.